The sequence spans 78 residues: MFKTINKSITSILLLLISFYQKWFSPFFGPRCRFIPSCSSYGYEAITRHGPWKGGWLTLKRLSRCHPLTPCGCDPVPD.

This sequence belongs to the UPF0161 family.

It is found in the cell inner membrane. Its function is as follows. Could be involved in insertion of integral membrane proteins into the membrane. The sequence is that of Putative membrane protein insertion efficiency factor from Prochlorococcus marinus (strain MIT 9301).